We begin with the raw amino-acid sequence, 135 residues long: Small ribosomal subunit protein uS12 (135 aa).

Residues 1–24 form a disordered region; that stretch reads MPTINQLVRKGRHSKTTKSKSPAL. Positions 9 to 18 are enriched in basic residues; it reads RKGRHSKTTK. Position 102 is a 3-methylthioaspartic acid (aspartate 102).

The protein belongs to the universal ribosomal protein uS12 family. As to quaternary structure, part of the 30S ribosomal subunit. Contacts proteins S8 and S17. May interact with IF1 in the 30S initiation complex.

Functionally, with S4 and S5 plays an important role in translational accuracy. Its function is as follows. Interacts with and stabilizes bases of the 16S rRNA that are involved in tRNA selection in the A site and with the mRNA backbone. Located at the interface of the 30S and 50S subunits, it traverses the body of the 30S subunit contacting proteins on the other side and probably holding the rRNA structure together. The combined cluster of proteins S8, S12 and S17 appears to hold together the shoulder and platform of the 30S subunit. The chain is Small ribosomal subunit protein uS12 from Lactobacillus delbrueckii subsp. bulgaricus (strain ATCC 11842 / DSM 20081 / BCRC 10696 / JCM 1002 / NBRC 13953 / NCIMB 11778 / NCTC 12712 / WDCM 00102 / Lb 14).